We begin with the raw amino-acid sequence, 444 residues long: Exodeoxyribonuclease 7 large subunit (444 aa).

The protein belongs to the XseA family. Heterooligomer composed of large and small subunits.

It localises to the cytoplasm. The catalysed reaction is Exonucleolytic cleavage in either 5'- to 3'- or 3'- to 5'-direction to yield nucleoside 5'-phosphates.. Functionally, bidirectionally degrades single-stranded DNA into large acid-insoluble oligonucleotides, which are then degraded further into small acid-soluble oligonucleotides. The sequence is that of Exodeoxyribonuclease 7 large subunit from Rickettsia canadensis (strain McKiel).